The following is a 416-amino-acid chain: MAYFLEQSDSEIFELIFEEYKRQNEHLEMIASENYTFPSVMEAMGSILTNKYAEGYPNKRYYGGCEVVDKIESLAIERAKKLFNCQFANVQAHSGSQANNAVYHALLKPYDKILGMDLSCGGHLTHGAKVSLTGKHYQSFSYGVNLDGYIDYEEALKIAQSVKPEIIVCGFSAYPREIDFKKFREIADEVGALLLGDIAHVAGLVVTGEHAHPFPHCHVVSSTTHKTLRGPRGGLILTNDEEIAAKIDKAIFPGTQGGPLMHVIAAKAVGFKENLKPEFKAYAKLVKSNMQVLAKALKEKNHKLVSGGTSNHLLLMDFLDKPYSGKDADIALGNAGITVNKNTIPGETRNPFVTSGIRIGSAALSARGMGAKEFEIIGNKISDILNDINNVSLQLHVKEELKAMANQFPVYQQPIF.

Residues Leu118 and 122–124 each bind (6S)-5,6,7,8-tetrahydrofolate; that span reads GHL. Lys226 is modified (N6-(pyridoxal phosphate)lysine). A (6S)-5,6,7,8-tetrahydrofolate-binding site is contributed by Glu242.

The protein belongs to the SHMT family. In terms of assembly, homodimer. Pyridoxal 5'-phosphate is required as a cofactor.

It is found in the cytoplasm. It catalyses the reaction (6R)-5,10-methylene-5,6,7,8-tetrahydrofolate + glycine + H2O = (6S)-5,6,7,8-tetrahydrofolate + L-serine. Its pathway is one-carbon metabolism; tetrahydrofolate interconversion. The protein operates within amino-acid biosynthesis; glycine biosynthesis; glycine from L-serine: step 1/1. Its function is as follows. Catalyzes the reversible interconversion of serine and glycine with tetrahydrofolate (THF) serving as the one-carbon carrier. This reaction serves as the major source of one-carbon groups required for the biosynthesis of purines, thymidylate, methionine, and other important biomolecules. Also exhibits THF-independent aldolase activity toward beta-hydroxyamino acids, producing glycine and aldehydes, via a retro-aldol mechanism. The sequence is that of Serine hydroxymethyltransferase from Helicobacter pylori (strain HPAG1).